A 1365-amino-acid chain; its full sequence is DNA-directed RNA polymerase subunit beta'' (1365 aa).

Zn(2+)-binding residues include cysteine 224, cysteine 295, cysteine 302, and cysteine 305.

Belongs to the RNA polymerase beta' chain family. RpoC2 subfamily. In terms of assembly, in plastids the minimal PEP RNA polymerase catalytic core is composed of four subunits: alpha, beta, beta', and beta''. When a (nuclear-encoded) sigma factor is associated with the core the holoenzyme is formed, which can initiate transcription. Zn(2+) is required as a cofactor.

It is found in the plastid. It localises to the chloroplast. The enzyme catalyses RNA(n) + a ribonucleoside 5'-triphosphate = RNA(n+1) + diphosphate. Functionally, DNA-dependent RNA polymerase catalyzes the transcription of DNA into RNA using the four ribonucleoside triphosphates as substrates. This is DNA-directed RNA polymerase subunit beta'' from Fagopyrum esculentum subsp. ancestrale (Wild buckwheat).